The following is a 247-amino-acid chain: ATP synthase subunit a, chloroplastic (247 aa).

Helical transmembrane passes span 38–58 (QVLI…ILVV), 95–115 (VPFI…GALL), 134–154 (INTT…AGIS), 199–219 (LVVV…VMFL), and 220–240 (GLFT…AYIG).

Belongs to the ATPase A chain family. As to quaternary structure, F-type ATPases have 2 components, CF(1) - the catalytic core - and CF(0) - the membrane proton channel. CF(1) has five subunits: alpha(3), beta(3), gamma(1), delta(1), epsilon(1). CF(0) has four main subunits: a, b, b' and c.

The protein resides in the plastid. The protein localises to the chloroplast thylakoid membrane. In terms of biological role, key component of the proton channel; it plays a direct role in the translocation of protons across the membrane. This chain is ATP synthase subunit a, chloroplastic, found in Pisum sativum (Garden pea).